We begin with the raw amino-acid sequence, 313 residues long: Protein FixB (313 aa).

255–283 (LYLAVGISGQIQHMVGANASQTIFAINKD) lines the FAD pocket.

It belongs to the ETF alpha-subunit/FixB family. As to quaternary structure, heterodimer of FixA and FixB.

Its pathway is amine and polyamine metabolism; carnitine metabolism. Required for anaerobic carnitine reduction. May bring reductant to CaiA. The chain is Protein FixB from Shigella flexneri.